The chain runs to 198 residues: MAGSPRVGVLALQGDVREHLTVLWALGADAVRVRRPDELETVAGLVIPGGESSVMDKLARTVGLAGPLRNAIAGGLPVYGTCAGLIMLADTIVDGIAGQRSLGGLDVAVRRNAFGSQAESFETDLSFPTLGAEPMHAVFIRAPIVESVGPRATVLARVPDGRVVAVEQDNLLGTAFHPELSGDKRFHEYFLVKVHGRV.

50 to 52 (GES) contacts L-glutamine. Residue Cys82 is the Nucleophile of the active site. L-glutamine-binding positions include Arg111 and 140 to 141 (IR). Active-site charge relay system residues include His177 and Glu179.

This sequence belongs to the glutaminase PdxT/SNO family. In the presence of PdxS, forms a dodecamer of heterodimers. Only shows activity in the heterodimer.

It carries out the reaction aldehydo-D-ribose 5-phosphate + D-glyceraldehyde 3-phosphate + L-glutamine = pyridoxal 5'-phosphate + L-glutamate + phosphate + 3 H2O + H(+). It catalyses the reaction L-glutamine + H2O = L-glutamate + NH4(+). Its pathway is cofactor biosynthesis; pyridoxal 5'-phosphate biosynthesis. Catalyzes the hydrolysis of glutamine to glutamate and ammonia as part of the biosynthesis of pyridoxal 5'-phosphate. The resulting ammonia molecule is channeled to the active site of PdxS. The protein is Pyridoxal 5'-phosphate synthase subunit PdxT of Leifsonia xyli subsp. xyli (strain CTCB07).